We begin with the raw amino-acid sequence, 357 residues long: Acyl-coenzyme A:6-aminopenicillanic-acid-acyltransferase 40 kDa form (357 aa).

6-aminopenicillanate contacts are provided by Asp121 and Arg310.

Belongs to the peptidase C45 family. The active form of the enzyme results from processing of the 40-kDa monomeric precursor to a heterodimer containing subunits of 11 and 29 kDa. Post-translationally, the pre-AAT protein is synthesized as 40 kDa precursor which is then self-processed into an 11 kDa (protein A) and a 29 kDa (protein B). The B protein carries AAT activity.

The protein resides in the peroxisome matrix. The catalysed reaction is isopenicillin N + phenylacetyl-CoA + H2O = penicillin G + L-2-aminoadipate + CoA + H(+). It functions in the pathway antibiotic biosynthesis; penicillin G biosynthesis; penicillin G from L-alpha-aminoadipate and L-cysteine and L-valine: step 3/3. Functionally, nonribosomal peptide synthetase; part of the gene cluster that mediates the biosynthesis of penicillin, the world's most important antibiotic. AatA catalyzes the exchange of the alpha-aminoadipyl side chain of isopenicillin N for phenylacetic acid to yield penicillin. This step occurs in the peroxisomal matrix and the penM and paaT transporters are involved in the isopenicillin N and phenylacetic acid import into the peroxisome, respectively. The penicillin biosynthesis occurs via 3 enzymatic steps, the first corresponding to the production of the tripeptide N-[(5S)-5-amino-5-carboxypentanoyl]-L-cysteinyl-D-valine (LLD-ACV or ACV) by the NRPS acvA. The tripeptide ACV is then cyclized to isopenicillin N (IPN) by the isopenicillin N synthase ipnA that forms the beta-lactam nucleus. Finally, the alpha-aminoadipyl side chain is exchanged for phenylacetic acid by the isopenicillin N acyltransferase penDE to yield penicillin in the peroxisomal matrix. The protein is Acyl-coenzyme A:6-aminopenicillanic-acid-acyltransferase 40 kDa form of Emericella nidulans (strain FGSC A4 / ATCC 38163 / CBS 112.46 / NRRL 194 / M139) (Aspergillus nidulans).